We begin with the raw amino-acid sequence, 160 residues long: Major pollen allergen Bet v 1-M/N (160 aa).

Residues Lys-55, Tyr-82, Tyr-84, and Asn-101 each coordinate brassinolide.

This sequence belongs to the BetVI family.

Its subcellular location is the cytoplasm. In terms of biological role, may be a general steroid carrier protein. The protein is Major pollen allergen Bet v 1-M/N (BETV1M) of Betula pendula (European white birch).